The chain runs to 300 residues: Acetaldehyde dehydrogenase (300 aa).

11–14 provides a ligand contact to NAD(+); it reads SGNI. The active-site Acyl-thioester intermediate is Cys-129. Residues 160–168 and Asn-271 each bind NAD(+); that span reads SVGPGTRQN.

Belongs to the acetaldehyde dehydrogenase family.

The enzyme catalyses acetaldehyde + NAD(+) + CoA = acetyl-CoA + NADH + H(+). The chain is Acetaldehyde dehydrogenase (mhpF) from Pseudoalteromonas translucida (strain TAC 125).